Reading from the N-terminus, the 507-residue chain is ATP synthase subunit alpha, chloroplastic (507 aa).

Residue 170-177 coordinates ATP; the sequence is GDRQTGKT.

Belongs to the ATPase alpha/beta chains family. In terms of assembly, F-type ATPases have 2 components, CF(1) - the catalytic core - and CF(0) - the membrane proton channel. CF(1) has five subunits: alpha(3), beta(3), gamma(1), delta(1), epsilon(1). CF(0) has four main subunits: a, b, b' and c.

It localises to the plastid. Its subcellular location is the chloroplast thylakoid membrane. It catalyses the reaction ATP + H2O + 4 H(+)(in) = ADP + phosphate + 5 H(+)(out). Its function is as follows. Produces ATP from ADP in the presence of a proton gradient across the membrane. The alpha chain is a regulatory subunit. The chain is ATP synthase subunit alpha, chloroplastic from Solanum bulbocastanum (Wild potato).